The primary structure comprises 441 residues: Polyketide methyltransferase ustM (441 aa).

Positions 266 to 368 are methyltransferase (CMeT) domain; sequence LEVGAGLGGT…VRKLLRGGGF (103 aa).

Belongs to the methyltransferase superfamily.

The protein operates within secondary metabolite biosynthesis. In terms of biological role, polyketide methyltransferase; part of the gene cluster that mediates the biosynthesis of ustilaginoidins, dimeric gamma-naphthopyrones isolated from different fungal species. The first step in the biosynthesis of ustilaginoidins is the production of gamma-naphthopyrone precursor YWA1 by the non-reducing polyketide synthase ustP, via condensation of one acetyl-CoA starter unit with 6 malonyl-CoA units. YWA1 is then probably substrate of the ustZ to yield norrubrofusarin via a dehydration reaction. A key enzyme in the biosynthetic pathway is the laccase ustL, which catalyzes the oxidative dimerization of norrubrofusarin to ustilaginoidin A. It can produce the M- and P-atropisomers in varying amounts, depending on the reaction conditions. For the biosynthesis of 3-methylustilaginoid in derivatives such as chaetochromin A, a methylated derivative of YWA1 is required. The C-methylation is considered to be catalyzed by ustM, the phosphopantetheine attachment site of which indicates that it acts on the growing polyketide chain before release of the product. For the biosynthesis of chaetochromin A, it is assumed that saturation of the D2 double bond takes place before dimerization, and is probably catalyzed by an external reductase because no candidate gene was identified within the cluster. The protein is Polyketide methyltransferase ustM of Ustilaginoidea virens (Rice false smut fungus).